The sequence spans 550 residues: Dipeptide-binding protein (550 aa).

The first 22 residues, 1 to 22, serve as a signal peptide directing secretion; that stretch reads MKQAKIIGLSTVIALSGIILVA. The N-palmitoyl cysteine moiety is linked to residue Cys-23. Cys-23 carries the S-diacylglycerol cysteine lipid modification.

This sequence belongs to the bacterial solute-binding protein 5 family. In terms of assembly, the complex is composed of two ATP-binding proteins (DppD and DppF), two transmembrane proteins (DppB and DppC) and a solute-binding protein (DppA).

It is found in the cell membrane. In terms of biological role, part of the ABC transporter DppABCDF involved in dipeptide transport. Binds di- and tripeptides with high affinity. Requires a free N-terminal alpha-amino group and an alpha-peptide bound contiguous with the N-terminal amino group, has a strong selectivity for L-residues, and shows preference for dipeptides containing methionine or arginine, followed by hydrophobic tripeptides consisting of leucine or valine residues. The protein is Dipeptide-binding protein of Lactococcus lactis subsp. cremoris (strain MG1363).